The following is a 251-amino-acid chain: Probable transcriptional regulatory protein CC_3243 (251 aa).

This sequence belongs to the TACO1 family.

Its subcellular location is the cytoplasm. This is Probable transcriptional regulatory protein CC_3243 from Caulobacter vibrioides (strain ATCC 19089 / CIP 103742 / CB 15) (Caulobacter crescentus).